Here is a 384-residue protein sequence, read N- to C-terminus: Geranylgeranyl pyrophosphate synthase (384 aa).

2 disordered regions span residues M1–T25 and R39–Y78. Polar residues predominate over residues L47–I62. Residues K112, R115, and H144 each contribute to the isopentenyl diphosphate site. Mg(2+) is bound by residues D151 and D155. R160 provides a ligand contact to dimethylallyl diphosphate. An isopentenyl diphosphate-binding site is contributed by R161. The dimethylallyl diphosphate site is built by K238, T239, and Q272. Residue D275 participates in Mg(2+) binding. Residues N279, K289, and K299 each contribute to the dimethylallyl diphosphate site.

The protein belongs to the FPP/GGPP synthase family. It depends on Mg(2+) as a cofactor.

The enzyme catalyses isopentenyl diphosphate + dimethylallyl diphosphate = (2E)-geranyl diphosphate + diphosphate. The catalysed reaction is isopentenyl diphosphate + (2E)-geranyl diphosphate = (2E,6E)-farnesyl diphosphate + diphosphate. It catalyses the reaction isopentenyl diphosphate + (2E,6E)-farnesyl diphosphate = (2E,6E,10E)-geranylgeranyl diphosphate + diphosphate. The protein operates within secondary metabolite biosynthesis. In terms of biological role, catalyzes the trans-addition of the 3 molecules of isopentenyl diphosphate (IPP) onto dimethylallyl diphosphate (DMAPP) to form geranylgeranyl pyrophosphate (GGPP). GGPP is a precursor for the biosynthesis of many secondary metabolites, including the indole diterpenes nodulisporic acids (NA). The chain is Geranylgeranyl pyrophosphate synthase from Hypoxylon pulicicidum.